We begin with the raw amino-acid sequence, 225 residues long: Membrane protein (225 aa).

Topologically, residues 1–20 (MDNTTNCTLGTEQAVQLFKE) are virion surface. The helical transmembrane segment at 21–41 (YNLFVTAFLLFLTILLQYGYA) threads the bilayer. Topologically, residues 42–51 (TRNKVIYILK) are intravirion. The helical transmembrane segment at 52–72 (MIVLWCFWPLNIAVGAISCIY) threads the bilayer. Topologically, residues 73–77 (PPNTG) are virion surface. Residues 78–98 (GLVAAIILTVFACLSFIGYWI) traverse the membrane as a helical segment. Over 99 to 225 (QSFRLFKRCR…VATGGSSLYT (127 aa)) the chain is Intravirion.

The protein belongs to the gammacoronaviruses M protein family. In terms of assembly, homomultimer. Interacts with envelope E protein in the budding compartment of the host cell, which is located between endoplasmic reticulum and the Golgi complex. Forms a complex with HE and S proteins. Interacts with nucleocapsid N protein. This interaction probably participates in RNA packaging into the virus.

It is found in the virion membrane. Its subcellular location is the host Golgi apparatus membrane. Its function is as follows. Component of the viral envelope that plays a central role in virus morphogenesis and assembly via its interactions with other viral proteins. The protein is Membrane protein of Avian infectious bronchitis virus (strain 6/82) (IBV).